The sequence spans 83 residues: MVTIRLARGGAKKRPFYNIVVADSRNARDGRFIERVGFFNPLARGQEETLRLDLARVEHWVSNGAAATERVAKLIKDARKATA.

The protein belongs to the bacterial ribosomal protein bS16 family.

This Shewanella baltica (strain OS223) protein is Small ribosomal subunit protein bS16.